Consider the following 157-residue polypeptide: Peptide methionine sulfoxide reductase MsrA (157 aa).

C13 is a catalytic residue.

The protein belongs to the MsrA Met sulfoxide reductase family.

It catalyses the reaction L-methionyl-[protein] + [thioredoxin]-disulfide + H2O = L-methionyl-(S)-S-oxide-[protein] + [thioredoxin]-dithiol. The catalysed reaction is [thioredoxin]-disulfide + L-methionine + H2O = L-methionine (S)-S-oxide + [thioredoxin]-dithiol. In terms of biological role, has an important function as a repair enzyme for proteins that have been inactivated by oxidation. Catalyzes the reversible oxidation-reduction of methionine sulfoxide in proteins to methionine. This Methanococcus maripaludis (strain C5 / ATCC BAA-1333) protein is Peptide methionine sulfoxide reductase MsrA.